The following is a 121-amino-acid chain: Putative RNase MJ1216 (121 aa).

Catalysis depends on residues arginine 76 and histidine 81. The RX(4)HXY motif signature appears at 76–83 (RDKLIHQY). An O-di-AMP-tyrosine modification is found at tyrosine 83.

The protein belongs to the HepT RNase toxin family. As to quaternary structure, homodimer, probably forms a complex with antitoxin MJ1215 or MJ1217. In terms of processing, modified by antitoxin MJ1215 or MJ1217; probably at least 2 successive AMPylation events occur on Tyr-83.

In terms of biological role, probable toxic component of a putative type VII toxin-antitoxin (TA) system, probably an RNase. Probably neutralized by antitoxin MJ1215 or MJ1217. Neutralization may be due to AMPylation by antitoxin. This chain is Putative RNase MJ1216, found in Methanocaldococcus jannaschii (strain ATCC 43067 / DSM 2661 / JAL-1 / JCM 10045 / NBRC 100440) (Methanococcus jannaschii).